The sequence spans 196 residues: Large ribosomal subunit protein bL25 (196 aa).

The protein belongs to the bacterial ribosomal protein bL25 family. CTC subfamily. Part of the 50S ribosomal subunit; part of the 5S rRNA/L5/L18/L25 subcomplex. Contacts the 5S rRNA. Binds to the 5S rRNA independently of L5 and L18.

This is one of the proteins that binds to the 5S RNA in the ribosome where it forms part of the central protuberance. In Treponema pallidum subsp. pallidum (strain SS14), this protein is Large ribosomal subunit protein bL25.